The chain runs to 262 residues: UPF0739 protein C1orf74 homolog (262 aa).

This sequence belongs to the UPF0739 family.

In Xenopus laevis (African clawed frog), this protein is UPF0739 protein C1orf74 homolog.